We begin with the raw amino-acid sequence, 33 residues long: Cytochrome b6-f complex subunit 8 (33 aa).

A helical membrane pass occupies residues 2–22 (LITLGWASLAALFSFSIAMVV).

This sequence belongs to the PetN family. In terms of assembly, the 4 large subunits of the cytochrome b6-f complex are cytochrome b6, subunit IV (17 kDa polypeptide, PetD), cytochrome f and the Rieske protein, while the 4 small subunits are PetG, PetL, PetM and PetN. The complex functions as a dimer.

The protein resides in the plastid. It localises to the organellar chromatophore thylakoid membrane. Component of the cytochrome b6-f complex, which mediates electron transfer between photosystem II (PSII) and photosystem I (PSI), cyclic electron flow around PSI, and state transitions. This chain is Cytochrome b6-f complex subunit 8, found in Paulinella chromatophora.